Consider the following 332-residue polypeptide: Melanocortin receptor 4 (332 aa).

Residues 1-43 lie on the Extracellular side of the membrane; sequence MNSTHHHGMYTSLHLWNRSSHGLHGNASESLGKGHSDGGCYEQ. N-linked (GlcNAc...) asparagine glycans are attached at residues asparagine 2, asparagine 17, and asparagine 26. Cystine bridges form between cysteine 40–cysteine 279 and cysteine 271–cysteine 277. Residues 44–69 form a helical membrane-spanning segment; the sequence is LFVSPEVFVTLGVISLLENILVIVAI. Topologically, residues 70–81 are cytoplasmic; that stretch reads AKNKNLHSPMYF. Residues 82 to 106 form a helical membrane-spanning segment; that stretch reads FICSLAVADMLVSVSNGSETIVITL. Glutamate 100, aspartate 122, and aspartate 126 together coordinate Ca(2+). At 107 to 123 the chain is on the extracellular side; sequence LNSTDTDAQSFTVNIDN. A helical transmembrane segment spans residues 124 to 145; that stretch reads VIDSVICSSLLASICSLLSIAV. At 146–165 the chain is on the cytoplasmic side; that stretch reads DRYFTIFYALQYHNIMTVRR. A helical transmembrane segment spans residues 166-186; that stretch reads VGIIISCIWAACTVSGVLFII. Residues 187-191 are Extracellular-facing; sequence YSDSS. Residues 192-215 traverse the membrane as a helical segment; that stretch reads AVIICLITMFFTMLVLMASLYVHM. At 216–248 the chain is on the cytoplasmic side; it reads FLMARLHIKRIAVLPGTGTIRQGANMKGAITLT. The helical transmembrane segment at 249–271 threads the bilayer; that stretch reads ILIGVFVVCWAPFFLHLLFYISC. Residues 272 to 280 are Extracellular-facing; sequence PQNPYCVCF. Residues 281–304 form a helical membrane-spanning segment; that stretch reads MSHFNLYLILIMCNAVIDPLIYAL. Residues 305–332 are Cytoplasmic-facing; that stretch reads RSQELRKTFKEIICFYPLGGICELPGRY. Cysteine 318 carries the S-palmitoyl cysteine lipid modification.

The protein belongs to the G-protein coupled receptor 1 family. As to quaternary structure, homodimer; disulfide-linked, also forms higher order oligomers. Interacts with GNAS. Interacts with ATRNL1. Interacts with MGRN1; this interaction competes with GNAS-binding and thus inhibits agonist-induced cAMP production. Interacts with MRAP and MRAP2; these associated factors increase ligand-sensitivity and generation of cAMP. As to expression, brain, enriched in the striatum, nucleus accumbens, and periaqueductal gray.

Its subcellular location is the cell membrane. In terms of biological role, hormone receptor that acts as a key component of the leptin-melanocortin pathway at the intersection of homeostatic maintenance of energetic state. Plays a role in regulating food intake: activation by a stimulating hormone such as anorexigenic alpha-melanocyte stimulating hormone (alpha-MSH) inhibits appetite, whereas binding to a natural antagonist like Agouti-related protein/AGRP promotes appetite. G-protein-coupled receptor that activates conventional Galphas signaling leading to induction of anorexogenic signaling in the hypothalamus to result in negative energy balance. Regulates the firing activity of neurons from the hypothalamus by alpha-MSH and AGRP independently of Galphas signaling by ligand-induced coupling of closure of inwardly rectifying potassium channel KCNJ13. In intestinal epithelial cells, plays a role in the inhibition of hepatic glucose production via nesfatin-1/NUCB2 leading to increased cyclic adenosine monophosphate (cAMP) levels and glucagon-like peptide 1 (GLP-1) secretion in the intestinal epithelium. The chain is Melanocortin receptor 4 (Mc4r) from Rattus norvegicus (Rat).